The following is a 560-amino-acid chain: Membrane protein insertase YidC (560 aa).

Transmembrane regions (helical) follow at residues 7–27, 334–354, 357–377, 431–451, 476–496, and 522–542; these read NLIA…YFVV, AIDF…MNFF, YVGN…LLMF, LPIL…YVTI, LFGF…WPIL, and FMPL…LIYW.

This sequence belongs to the OXA1/ALB3/YidC family. Type 1 subfamily. In terms of assembly, interacts with the Sec translocase complex via SecD. Specifically interacts with transmembrane segments of nascent integral membrane proteins during membrane integration.

The protein resides in the cell inner membrane. In terms of biological role, required for the insertion and/or proper folding and/or complex formation of integral membrane proteins into the membrane. Involved in integration of membrane proteins that insert both dependently and independently of the Sec translocase complex, as well as at least some lipoproteins. Aids folding of multispanning membrane proteins. In Rickettsia canadensis (strain McKiel), this protein is Membrane protein insertase YidC.